A 680-amino-acid polypeptide reads, in one-letter code: Viral IRF2-like protein (680 aa).

Positions 7-103 form a DNA-binding region, IRF tryptophan pentad repeat; that stretch reads SEWLTDFIID…RPFTIYKGKM (97 aa). 4 disordered regions span residues 156–201, 220–257, 343–365, and 403–423; these read SLRK…SENE, EEPEPSGFGSSGQSSSLLAPDSPRPSTSQVQGPLHVHT, ETASPQGPMQSEGGEEGSTESVS, and ASPQGPMQSEGGEEGSTESVS. The span at 168–188 shows a compositional bias: low complexity; that stretch reads KQAAAVATPTTSSAAEVSSRS. Positions 191–200 are enriched in acidic residues; sequence EDTESSDSEN. Over residues 220 to 240 the composition is skewed to low complexity; that stretch reads EEPEPSGFGSSGQSSSLLAPD.

The protein belongs to the IRF family. In terms of assembly, interacts with host EIF2AK2/PKR. Interacts with host USP7.

It is found in the host nucleus. Its subcellular location is the host cytoplasm. DNA-binding transcription factor that plays a role in the modulation of host immune response. Acts by interacting with host EIF2AK2/PKR and inhibiting its activation. In turn, EIF2AK2/PKR substrates including EIF2S1 or histone H2A are not phosphorylated. Inhibits type I interferon signaling by targeting host IRF3 during viral reactivation from latency. Attenuates the transcriptional activity of host FOXO3 via activation of the AKT1 signaling pathway, inhibiting FOXO3-mediated apoptosis. Also suppresses the expression of viral early lytic genes in both newly infected and reactivated infected host cells allowing regulation of viral life cycle by harnessing the interferon pathway. Mechanistically, promotes host PML bodies formation as well as host antiviral restriction factors IFIT1-3 expression leading to inhibition of viral early lytic proteins. Also regulates host TRAF3 and TRAF6 ubiquitination by interacting with USP7 deubiquitinase thereby influencing TRAF3/6-mediated signal transduction. This Human herpesvirus 8 type P (isolate GK18) (HHV-8) protein is Viral IRF2-like protein (vIRF-2).